The chain runs to 1500 residues: Rho GTPase-activating protein 35 (1500 aa).

The tract at residues 1-266 (MMMARKQDVR…IPYFEALKQQ (266 aa)) is has GTPase activity, required for proper localization. Residues K28, 33–37 (IGKSC), L52, S56, 95–97 (EQT), 201–203 (KCD), and 229–231 (SAR) each bind GTP. 4 FF domains span residues 270–327 (IATA…HIHR), 368–422 (KLLE…HLEK), 429–483 (RAEM…HQKQ), and 485–550 (IDKA…HIHF). At Y308 the chain carries Phosphotyrosine. At S589 the chain carries Phosphoserine. One can recognise a pG1 pseudoGTPase domain in the interval 592–767 (DPNIDRINLV…LLDSKRNLNL (176 aa)). Phosphoserine is present on residues S770 and S773. Residues 783–947 (RIVMCLMCGD…FKDVVDKKNI (165 aa)) enclose the pG2 pseudoGTPase domain. S970, S975, S985, S1002, and S1073 each carry phosphoserine. Residues 970–989 (SPRAGSPLCNSNLQDSEEDI) form a disordered region. The segment at 1058–1090 (SYLDQGHRDGQRKSVSSSTWLPPDGFDPSDYAE) is disordered. Y1088 is modified (phosphotyrosine). Y1106 carries the phosphotyrosine; by ABL2 and PTK6 modification. Polar residues predominate over residues 1125-1142 (KAQSNGSGNGSDSEMDTS). The segment at 1125–1147 (KAQSNGSGNGSDSEMDTSSLERG) is disordered. Phosphoserine is present on residues S1135, S1143, S1151, S1177, S1180, and S1222. The segment at 1178-1208 (VGSDDELGPIRKKEEDQASQGYKGDNAVIPY) is disordered. A required for phospholipid binding and regulation of the substrate preference region spans residues 1214–1237 (PRRRNILRSLRRNTKKPKPKPRPS). The residue at position 1227 (T1227) is a Phosphothreonine. A Phosphoserine modification is found at S1237. A Rho-GAP domain is found at 1250–1437 (VPLTTVVTPE…LFIQQCPFFF (188 aa)). The interval 1444 to 1500 (EPPGATPSSPSAVASTVPFLTSTPVTSQPSPPQSPPPTPQSPMQALLPSQLQAEHTL) is disordered. Positions 1449–1471 (TPSSPSAVASTVPFLTSTPVTSQ) are enriched in low complexity. Positions 1472 to 1483 (PSPPQSPPPTPQ) are enriched in pro residues. Phosphoserine occurs at positions 1473 and 1477. T1481 carries the phosphothreonine modification. At S1484 the chain carries Phosphoserine. Residues 1490–1500 (LPSQLQAEHTL) are compositionally biased toward polar residues.

Interacts with RASA1. Interacts with the general transcription factor GTF2I, the interaction sequesters GTF2I in the cytoplasm. Post-translationally, phosphorylation of Tyr-1106 by PTK6 promotes the association with RASA1, inactivating RHOA while activating RAS. Phosphorylation at Tyr-308 by PDGFRA inhibits binding to GTF2I. Phosphorylated by PRKCA at Ser-1222 and Thr-1227, induces relocalization from the cytoplasm to regions of plasma membrane ruffling and prevents the binding and substrate specificity regulation by phospholipids. In brain, phosphorylated by FYN and SRC. During focal adhesion formation, phosphorylated by MAPK1 and MAPK3 at the C-terminal region, probably at Ser-1452, Ser-1477, Thr-1481 and Ser-1484. Phosphorylation by MAPK1 and MAPK3 inhibits GAP function and localizes ARGHAP35 away from newly forming focal adhesions and stress fibers in cells spreading on fibronectin. Phosphorylation at Ser-1477 and Thr-1481 by GSK3B requires priming by MAPK and inhibits RhoGAP activity and modulates polarized cell migration. Strongly expressed in retina (photoreceptor layer) and brain. Expression is maximal in the occipital, frontal, temporal lobe and also the cerebellum. Medium expression in the medulla and also in kidney, lung, liver, heart and spleen.

The protein resides in the cytoplasm. The protein localises to the cytoskeleton. It is found in the cilium basal body. It localises to the nucleus. Its subcellular location is the cell membrane. Functionally, rho GTPase-activating protein (GAP). Binds several acidic phospholipids which inhibits the Rho GAP activity to promote the Rac GAP activity. This binding is inhibited by phosphorylation by PRKCA. Involved in cell differentiation as well as cell adhesion and migration, plays an important role in retinal tissue morphogenesis, neural tube fusion, midline fusion of the cerebral hemispheres and mammary gland branching morphogenesis. Transduces signals from p21-ras to the nucleus, acting via the ras GTPase-activating protein (GAP). Transduces SRC-dependent signals from cell-surface adhesion molecules, such as laminin, to promote neurite outgrowth. Regulates axon outgrowth, guidance and fasciculation. Modulates Rho GTPase-dependent F-actin polymerization, organization and assembly, is involved in polarized cell migration and in the positive regulation of ciliogenesis and cilia elongation. During mammary gland development, is required in both the epithelial and stromal compartments for ductal outgrowth. Represses transcription of the glucocorticoid receptor by binding to the cis-acting regulatory sequence 5'-GAGAAAAGAAACTGGAGAAACTC-3'; this function is however unclear and would need additional experimental evidences. The protein is Rho GTPase-activating protein 35 of Canis lupus familiaris (Dog).